The chain runs to 262 residues: tRNA pseudouridine synthase A (262 aa).

The active-site Nucleophile is the D51. Position 106 (Y106) interacts with substrate.

Belongs to the tRNA pseudouridine synthase TruA family.

It carries out the reaction uridine(38/39/40) in tRNA = pseudouridine(38/39/40) in tRNA. Functionally, formation of pseudouridine at positions 38, 39 and 40 in the anticodon stem and loop of transfer RNAs. This chain is tRNA pseudouridine synthase A, found in Pyrococcus horikoshii (strain ATCC 700860 / DSM 12428 / JCM 9974 / NBRC 100139 / OT-3).